Here is a 182-residue protein sequence, read N- to C-terminus: Nucleosome assembly protein 1-like 5 (182 aa).

Positions 1-71 (MADSENQGPA…APKPKNDFIE (71 aa)) are disordered. Composition is skewed to low complexity over residues 7–21 (QGPA…AAEA) and 28–49 (AEGG…SAAG). Residues 81-107 (VLALKKLQKRCDKIEAKFDKEFQALEK) adopt a coiled-coil conformation. The interval 134–182 (LEGEEEEEEEYEDDEEEGEDEEEEEAAAEAAAGAKHDDAHAEMPDDAKK) is disordered. Residues 135–160 (EGEEEEEEEYEDDEEEGEDEEEEEAA) show a composition bias toward acidic residues. Basic and acidic residues predominate over residues 167-182 (AKHDDAHAEMPDDAKK).

Belongs to the nucleosome assembly protein (NAP) family. Predominantly expressed in brain.

Its subcellular location is the nucleus. The polypeptide is Nucleosome assembly protein 1-like 5 (NAP1L5) (Homo sapiens (Human)).